The sequence spans 424 residues: L-glutamine:2-deoxy-scyllo-inosose aminotransferase (424 aa).

An N6-(pyridoxal phosphate)lysine modification is found at Lys-202.

The protein belongs to the DegT/DnrJ/EryC1 family. L-glutamine:2-deoxy-scyllo-inosose/scyllo-inosose aminotransferase subfamily. Pyridoxal 5'-phosphate serves as cofactor.

The enzyme catalyses 2-deoxy-L-scyllo-inosose + L-glutamine = 2-deoxy-scyllo-inosamine + 2-oxoglutaramate. It carries out the reaction 3-amino-2,3-dideoxy-scyllo-inosose + L-glutamine = 2-deoxystreptamine + 2-oxoglutaramate. It functions in the pathway metabolic intermediate biosynthesis; 2-deoxystreptamine biosynthesis; 2-deoxystreptamine from D-glucose 6-phosphate: step 2/4. The protein operates within metabolic intermediate biosynthesis; 2-deoxystreptamine biosynthesis; 2-deoxystreptamine from D-glucose 6-phosphate: step 4/4. Its pathway is antibiotic biosynthesis; neomycin biosynthesis. Its function is as follows. Catalyzes the PLP-dependent transamination of 2-deoxy-scyllo-inosose (2-DOI) to form 2-deoxy-scyllo-inosamine (2-DOIA) using L-glutamine as the amino donor. Also catalyzes the transamination of 3-amino-2,3-dideoxy-scyllo-inosose (keto-2-DOIA) into 2-deoxystreptamine (2-DOS). The sequence is that of L-glutamine:2-deoxy-scyllo-inosose aminotransferase (neoB) from Streptomyces fradiae (Streptomyces roseoflavus).